Consider the following 367-residue polypeptide: dTDP-4-amino-4,6-dideoxy-D-glucose transaminase (367 aa).

N6-(pyridoxal phosphate)lysine is present on Lys184.

It belongs to the DegT/DnrJ/EryC1 family. Pyridoxal 5'-phosphate is required as a cofactor.

It carries out the reaction dTDP-4-amino-4,6-dideoxy-D-glucose + 2-oxoglutarate = dTDP-4-dehydro-6-deoxy-alpha-D-glucose + L-glutamate. The protein operates within bacterial outer membrane biogenesis; lipopolysaccharide biosynthesis. Functionally, catalyzes the conversion of dTDP-4-dehydro-6-deoxy-D-glucose (dTDP-D-Glc4O) to dTDP-4-amino-4,6-dideoxy-D-glucose (dTDP-D-Qui4N). L-glutamine can also be used as amino donor. This is dTDP-4-amino-4,6-dideoxy-D-glucose transaminase (vioA) from Shigella dysenteriae.